The sequence spans 291 residues: Ribosomal RNA small subunit methyltransferase A (291 aa).

Positions 29, 31, 56, 77, 102, and 127 each coordinate S-adenosyl-L-methionine.

Belongs to the class I-like SAM-binding methyltransferase superfamily. rRNA adenine N(6)-methyltransferase family. RsmA subfamily.

The protein localises to the cytoplasm. It carries out the reaction adenosine(1518)/adenosine(1519) in 16S rRNA + 4 S-adenosyl-L-methionine = N(6)-dimethyladenosine(1518)/N(6)-dimethyladenosine(1519) in 16S rRNA + 4 S-adenosyl-L-homocysteine + 4 H(+). Functionally, specifically dimethylates two adjacent adenosines (A1518 and A1519) in the loop of a conserved hairpin near the 3'-end of 16S rRNA in the 30S particle. May play a critical role in biogenesis of 30S subunits. The polypeptide is Ribosomal RNA small subunit methyltransferase A (Geobacillus sp. (strain WCH70)).